The sequence spans 459 residues: Pentatricopeptide repeat-containing protein At1g07740, mitochondrial (459 aa).

A mitochondrion-targeting transit peptide spans 1-20 (MRRRLSSVLINNQCIASQRH). A disordered region spans residues 19-41 (RHYHTSRPEKPTKKASSHEPTHK). Residues 24–41 (SRPEKPTKKASSHEPTHK) show a composition bias toward basic and acidic residues. 10 PPR repeats span residues 80–114 (DYPS…NVRC), 115–149 (RESL…DCVR), 150–184 (TIQS…RLRP), 185–219 (NSVS…EVQP), 220–254 (SVVT…RIRP), 255–289 (NAVT…GCKP), 290–324 (GLVN…RIKP), 325–359 (DVVI…GCKP), 360–394 (NAAT…RHCP), and 395–429 (TPAT…NLSF).

Belongs to the PPR family. P subfamily.

It localises to the mitochondrion. This chain is Pentatricopeptide repeat-containing protein At1g07740, mitochondrial, found in Arabidopsis thaliana (Mouse-ear cress).